A 483-amino-acid polypeptide reads, in one-letter code: Bifunctional protein HldE (483 aa).

Residues 1–327 (MDDALAHLPR…ACASSAQGEP (327 aa)) form a ribokinase region. 201–204 (NRKE) is an ATP binding site. D272 is a catalytic residue. The segment at 354 to 483 (FTNGCFDLLH…TTNLIARMNS (130 aa)) is cytidylyltransferase.

This sequence in the N-terminal section; belongs to the carbohydrate kinase PfkB family. It in the C-terminal section; belongs to the cytidylyltransferase family. Homodimer.

The enzyme catalyses D-glycero-beta-D-manno-heptose 7-phosphate + ATP = D-glycero-beta-D-manno-heptose 1,7-bisphosphate + ADP + H(+). It catalyses the reaction D-glycero-beta-D-manno-heptose 1-phosphate + ATP + H(+) = ADP-D-glycero-beta-D-manno-heptose + diphosphate. It functions in the pathway nucleotide-sugar biosynthesis; ADP-L-glycero-beta-D-manno-heptose biosynthesis; ADP-L-glycero-beta-D-manno-heptose from D-glycero-beta-D-manno-heptose 7-phosphate: step 1/4. Its pathway is nucleotide-sugar biosynthesis; ADP-L-glycero-beta-D-manno-heptose biosynthesis; ADP-L-glycero-beta-D-manno-heptose from D-glycero-beta-D-manno-heptose 7-phosphate: step 3/4. In terms of biological role, catalyzes the phosphorylation of D-glycero-D-manno-heptose 7-phosphate at the C-1 position to selectively form D-glycero-beta-D-manno-heptose-1,7-bisphosphate. Functionally, catalyzes the ADP transfer from ATP to D-glycero-beta-D-manno-heptose 1-phosphate, yielding ADP-D-glycero-beta-D-manno-heptose. The polypeptide is Bifunctional protein HldE (Caulobacter vibrioides (strain ATCC 19089 / CIP 103742 / CB 15) (Caulobacter crescentus)).